The sequence spans 77 residues: Large ribosomal subunit protein bL28 (77 aa).

It belongs to the bacterial ribosomal protein bL28 family.

In Leptothrix cholodnii (strain ATCC 51168 / LMG 8142 / SP-6) (Leptothrix discophora (strain SP-6)), this protein is Large ribosomal subunit protein bL28.